Reading from the N-terminus, the 324-residue chain is uncharacterized protein (324 aa).

Helical transmembrane passes span 4 to 24 (GNKVVISWIVSIGFVGMPEFM), 63 to 83 (AALLLEYGWVLLVLIGLEGIL), 106 to 128 (ALFYGLAGAFVLRFGSLFAISFL), 132 to 151 (WQVQAIGAIYLLYISASHLL), 179 to 199 (LADIAFAVDSILAAVALAVTL), 209 to 229 (GLDGGQFLVILAGGIIGLVIM), 246 to 266 (LETAAFVIVGWVGVKLALYTL), and 282 to 302 (GTWKLIFWGVLAAIAVCGWFM).

This sequence belongs to the TerC family.

Its subcellular location is the cell membrane. This is an uncharacterized protein from Bacillus subtilis (strain 168).